The chain runs to 350 residues: MSESNNTPLLLRAARGEKVERTPVWMMRQAGRYMKIYRDLREKYPSFRERSENPDLAIEISLQPWHAFQPDGVIMFSDILTPLPGMGIPFDIIESKGPIIENPIRTQAQVDAMTPFDPAESLPFIKTILGTLRQEVGNASTVLGFVGAPWTLAAYAIEGKSSKNYAIIKNMAFSEPAVLHSFLGKIADAIADYVCYQIECGAQVIQMFDSWAGQLSPQDYDMFALPYQKRVVDKVKAKYPDFPLILYISGSAGVLERMGKSGVDIVSVDWTVDMADARQRLGKDMKVQGNIDPGVLFGSQDFIKARIIDTVRKAGNWGHILNLGHGVLVGTPEDNVRFFFETCKNVQSFL.

Substrate contacts are provided by residues arginine 28–arginine 32, aspartate 78, tyrosine 155, serine 210, and histidine 325.

Belongs to the uroporphyrinogen decarboxylase family. In terms of assembly, homodimer.

It localises to the cytoplasm. It carries out the reaction uroporphyrinogen III + 4 H(+) = coproporphyrinogen III + 4 CO2. Its pathway is porphyrin-containing compound metabolism; protoporphyrin-IX biosynthesis; coproporphyrinogen-III from 5-aminolevulinate: step 4/4. Functionally, catalyzes the decarboxylation of four acetate groups of uroporphyrinogen-III to yield coproporphyrinogen-III. The protein is Uroporphyrinogen decarboxylase of Picosynechococcus sp. (strain ATCC 27264 / PCC 7002 / PR-6) (Agmenellum quadruplicatum).